Consider the following 518-residue polypeptide: Putative Rieske 2Fe-2S iron-sulfur protein MSMEG_6410/MSMEI_6242 (518 aa).

Lysine 375 participates in a covalent cross-link: Isoglutamyl lysine isopeptide (Lys-Gln) (interchain with Q-Cter in protein Pup). The Rieske domain maps to 431-518; the sequence is LYTFFKCLTD…KGHELRCQKL (88 aa). [2Fe-2S] cluster is bound by residues cysteine 471, histidine 473, cysteine 491, and histidine 494.

It depends on [2Fe-2S] cluster as a cofactor.

The sequence is that of Putative Rieske 2Fe-2S iron-sulfur protein MSMEG_6410/MSMEI_6242 from Mycolicibacterium smegmatis (strain ATCC 700084 / mc(2)155) (Mycobacterium smegmatis).